Consider the following 427-residue polypeptide: ATP-sensitive inward rectifier potassium channel 12 (427 aa).

Residues 1-77 lie on the Cytoplasmic side of the membrane; that stretch reads MTAASRANPY…LADMFTTCVD (77 aa). C75 is modified (S-nitrosocysteine). Residues 78–104 traverse the membrane as a helical segment; sequence IRWRYMLLIFSLAFLASWLLFGIIFWV. Positions 79 and 81 each coordinate a 1,2-diacyl-sn-glycero-3-phospho-(1D-myo-inositol-4,5-bisphosphate). The Extracellular portion of the chain corresponds to 105–129; sequence IAVAHGDLEPAEGRGRTPCVLQVHG. A disulfide bridge links C123 with C155. An intramembrane region (helical; Pore-forming) is located at residues 130 to 146; sequence FMAAFLFSIETQTTIGY. K(+) contacts are provided by T143, I144, G145, and Y146. The short motif at 143 to 148 is the Selectivity filter element; the sequence is TIGYGL. Topologically, residues 147 to 155 are extracellular; it reads GLRCVTEEC. Residues 156–183 form a helical membrane-spanning segment; it reads PVAVFMVVAQSIVGCIIDSFMIGAIMAK. 2 residues coordinate a 1,2-diacyl-sn-glycero-3-phospho-(1D-myo-inositol-4,5-bisphosphate): K183 and K188. At 184–427 the chain is on the cytoplasmic side; sequence MARPKKRAQT…ERPYRRESEI (244 aa). Residues 387-427 are disordered; the sequence is DEEDEVATDRDGRSPQPEHDFDRLQASSAALERPYRRESEI. Residues 393 to 409 show a composition bias toward basic and acidic residues; that stretch reads ATDRDGRSPQPEHDFDR. Residues 425–427 carry the PDZ-binding motif; it reads SEI.

This sequence belongs to the inward rectifier-type potassium channel (TC 1.A.2.1) family. KCNJ12 subfamily. Homotetramer. Forms heteromer with KCNJ4. Can form heteromeric channels with Kir2.6/KCNJ18. Association, via its PDZ-recognition domain, with LIN7A, LIN7B, LIN7C, DLG1, CASK and APBA1 plays a key role in its localization and trafficking. As to expression, highest level in cerebellum.

It is found in the membrane. It localises to the cell membrane. The protein resides in the sarcolemma. The protein localises to the T-tubule. The catalysed reaction is K(+)(in) = K(+)(out). Activated by phosphatidylinositol 4,5-biphosphate (PtdIns(4,5)P2). PtdIns(4,5)P2 binding to the cytoplasmic side of the channel triggers a conformation change leading to channel opening. Inhibited by Ba(2+). In terms of biological role, inward rectifying potassium channel that probably participates in controlling the resting membrane potential in electrically excitable cells. It probably participates in establishing action potential waveform and excitability of neuronal and muscle tissues. Inward rectifier potassium channels are characterized by a greater tendency to allow potassium to flow into the cell rather than out of it. Their voltage dependence is regulated by the concentration of extracellular potassium; as external potassium is raised, the voltage range of the channel opening shifts to more positive voltages. The inward rectification is mainly due to the blockage of outward current by internal magnesium. This Mus musculus (Mouse) protein is ATP-sensitive inward rectifier potassium channel 12 (Kcnj12).